The chain runs to 279 residues: Putative ABC transporter ATP-binding protein CA_C1368 (279 aa).

The ABC transporter domain occupies 4 to 239 (ISINNVDYIY…KKVLRNINLR (236 aa)). Residue 37–44 (GPNGAGKS) coordinates ATP.

It belongs to the ABC transporter superfamily.

It localises to the cell membrane. Its function is as follows. Probably part of an ABC transporter complex. Responsible for energy coupling to the transport system. The polypeptide is Putative ABC transporter ATP-binding protein CA_C1368 (Clostridium acetobutylicum (strain ATCC 824 / DSM 792 / JCM 1419 / IAM 19013 / LMG 5710 / NBRC 13948 / NRRL B-527 / VKM B-1787 / 2291 / W)).